A 130-amino-acid chain; its full sequence is MNDPIGDMLTRIRNAQLRGKSTVSTPGSKLRAWVLDVLADEGYIRGYEKSTDVNGHPTLNIELKYYEGEPVIRELKRVSKPGRRVYMGVKDIPSVRQGLGVSIVSTPKGVMSDANARSNNVGGEVLCTVF.

It belongs to the universal ribosomal protein uS8 family. As to quaternary structure, part of the 30S ribosomal subunit. Contacts proteins S5 and S12.

Its function is as follows. One of the primary rRNA binding proteins, it binds directly to 16S rRNA central domain where it helps coordinate assembly of the platform of the 30S subunit. This chain is Small ribosomal subunit protein uS8, found in Ruegeria pomeroyi (strain ATCC 700808 / DSM 15171 / DSS-3) (Silicibacter pomeroyi).